A 376-amino-acid polypeptide reads, in one-letter code: Protein XRP2 (376 aa).

A disordered region spans residues 1–55; sequence MGCFFSKKSRRKSPKKDAALPTGDESATGNDLAETNNTALGSNSNQEAPKQYSWD. Glycine 2 is lipidated: N-myristoyl glycine. Cysteine 3 carries the S-palmitoyl cysteine lipid modification. Polar residues predominate over residues 25–48; that stretch reads ESATGNDLAETNNTALGSNSNQEA. Residues 49 to 204 enclose the C-CAP/cofactor C-like domain; it reads PKQYSWDKRE…NWSNIHDFTP (156 aa). GTP is bound by residues 123–124 and 140–143; these read GS and QQFR.

Belongs to the TBCC family. In terms of processing, myristoylated on Gly-2; which may be required for membrane targeting. Post-translationally, palmitoylated on Cys-3; which may be required for plasma membrane targeting. In terms of tissue distribution, in the retina, detected in both rod and cone photoreceptors (at protein level). Has strongest expression in the retinal outer nuclear layer (ONL) and weaker expression in the outer plexiform layer (OPL) and inner plexiform layer (IPL) (at protein level). Expressed in all tissues tested.

The protein localises to the cell membrane. The protein resides in the cell projection. It is found in the cilium. Its function is as follows. Acts as a GTPase-activating protein (GAP) involved in trafficking between the Golgi and the ciliary membrane. Acts as a GTPase-activating protein (GAP) for tubulin in concert with tubulin-specific chaperone C, but does not enhance tubulin heterodimerization. In the retina, required for maintenance of rod and cone photoreceptor cells. May have a role in normal retinal localization of the transducins GNB1 and GNAT1, and the rhodopsin kinase GRK1. In Danio rerio (Zebrafish), this protein is Protein XRP2.